The primary structure comprises 82 residues: DNA-directed RNA polymerase subunit Rpo5 (82 aa).

It belongs to the archaeal Rpo5/eukaryotic RPB5 RNA polymerase subunit family. As to quaternary structure, part of the RNA polymerase complex.

It is found in the cytoplasm. The enzyme catalyses RNA(n) + a ribonucleoside 5'-triphosphate = RNA(n+1) + diphosphate. DNA-dependent RNA polymerase (RNAP) catalyzes the transcription of DNA into RNA using the four ribonucleoside triphosphates as substrates. The chain is DNA-directed RNA polymerase subunit Rpo5 from Pyrococcus abyssi (strain GE5 / Orsay).